The primary structure comprises 146 residues: Negative cofactor 2 complex subunit beta (146 aa).

The disordered stretch occupies residues 124–146; it reads FRQSRSRLHHNSVSDPVKSEDSS. Residues Ser135, Ser137, and Ser142 each carry the phosphoserine modification.

In terms of assembly, component of the NC2 (negative cofactor 2) complex composed of BUR6 and NCB2. The NC2 complex associates with SPT15/TBP. Interacts with SPT15/TBP.

It localises to the nucleus. Functionally, component of the NC2 complex which represses RNA polymerase II transcription through binding to SPT15/TBP and thereby inhibiting the assembly of the preinitiation complex. The NC2 complex may also mediate transcriptional activation from TATA-driven promoters through association with SPT15/TBP. This chain is Negative cofactor 2 complex subunit beta (NCB2), found in Saccharomyces cerevisiae (strain ATCC 204508 / S288c) (Baker's yeast).